A 391-amino-acid polypeptide reads, in one-letter code: Multidrug resistance protein MdtL (391 aa).

Transmembrane regions (helical) follow at residues 4–24, 42–62, 69–89, 93–113, 131–151, 158–178, 203–222, 245–265, 269–289, 293–313, 331–351, and 356–376; these read FLICSFALVLLYPAGIDMYLV, IAFSVYLAGMAAAMLFAGKVA, PVAIPGAALFIIASVFCSLAE, LFLAGRFLQGLGAGCCYVVAF, LLNGITCIIPVLAPVLGHLIM, SLFWTMATMGIAVLMLSLFIL, FFLSRVVITTLSVSVILTFV, ALTAGVSMTVSFSTPFALGIF, TLMITSQVLFLAAGITLAVSP, VSLFGITLICAGFSVGFGVAM, LGIAQVCGSSLWIWLAAVVGI, and MLIGILIACSIVSLLLIMFVA.

It belongs to the major facilitator superfamily. DHA1 family. MdtL (TC 2.A.1.2.22) subfamily.

The protein resides in the cell inner membrane. Confers resistance to chloramphenicol. The protein is Multidrug resistance protein MdtL of Escherichia coli O127:H6 (strain E2348/69 / EPEC).